The sequence spans 767 residues: Protein transport protein Sec23A (767 aa).

Zn(2+) is bound by residues Cys-61, Cys-66, Cys-85, and Cys-88. The stretch at 634 to 720 (PEPVLLDSSS…EHGGSQARFL (87 aa)) is one Gelsolin-like repeat.

The protein belongs to the SEC23/SEC24 family. SEC23 subfamily. In terms of assembly, COPII is composed of at least five proteins: the Sec23/24 complex, the Sec13/31 complex and Sar1.

It localises to the cytoplasmic vesicle. Its subcellular location is the COPII-coated vesicle membrane. It is found in the endoplasmic reticulum membrane. The protein resides in the cytoplasm. The protein localises to the cytosol. Its function is as follows. Component of the coat protein complex II (COPII) which promotes the formation of transport vesicles from the endoplasmic reticulum (ER). The coat has two main functions, the physical deformation of the endoplasmic reticulum membrane into vesicles and the selection of cargo molecules for their transport to the Golgi complex. This Gallus gallus (Chicken) protein is Protein transport protein Sec23A.